Consider the following 327-residue polypeptide: GTPase Obg (327 aa).

Residues His-2–Ile-160 form the Obg domain. One can recognise an OBG-type G domain in the interval Ala-161–Arg-326. GTP contacts are provided by residues Gly-167–Ser-174, Phe-192–Phe-196, Asp-213–Gly-216, Asn-280–Asp-283, and Ser-307–Tyr-309. 2 residues coordinate Mg(2+): Ser-174 and Thr-194.

It belongs to the TRAFAC class OBG-HflX-like GTPase superfamily. OBG GTPase family. As to quaternary structure, monomer. Mg(2+) serves as cofactor.

It is found in the cytoplasm. Functionally, an essential GTPase which binds GTP, GDP and possibly (p)ppGpp with moderate affinity, with high nucleotide exchange rates and a fairly low GTP hydrolysis rate. Plays a role in control of the cell cycle, stress response, ribosome biogenesis and in those bacteria that undergo differentiation, in morphogenesis control. The protein is GTPase Obg of Borrelia hermsii (strain HS1 / DAH).